Here is a 380-residue protein sequence, read N- to C-terminus: Cytochrome b (380 aa).

The next 4 membrane-spanning stretches (helical) occupy residues 34 to 54, 78 to 99, 114 to 134, and 179 to 199; these read FGSLLGICLLTQILTGLLLAT, WLIRNLHANGASFFFICIYLHI, WNTGVILLLALMATAFVGYVL, and FFALHFLLPFMIAGLALIHLT. Heme b contacts are provided by His-84 and His-98. Heme b contacts are provided by His-183 and His-197. An a ubiquinone-binding site is contributed by His-202. The next 4 helical transmembrane spans lie at 227–247, 289–309, 321–341, and 348–368; these read LKDILGFIIMFLPLTTLALFS, LGGVLALAASVLVLFLAPLLH, FSQFLFWTLAANLFILTWVGS, and FIIIGQLASLTYFTILLLLFP.

The protein belongs to the cytochrome b family. In terms of assembly, the cytochrome bc1 complex contains 11 subunits: 3 respiratory subunits (MT-CYB, CYC1 and UQCRFS1), 2 core proteins (UQCRC1 and UQCRC2) and 6 low-molecular weight proteins (UQCRH/QCR6, UQCRB/QCR7, UQCRQ/QCR8, UQCR10/QCR9, UQCR11/QCR10 and a cleavage product of UQCRFS1). This cytochrome bc1 complex then forms a dimer. Heme b serves as cofactor.

Its subcellular location is the mitochondrion inner membrane. Its function is as follows. Component of the ubiquinol-cytochrome c reductase complex (complex III or cytochrome b-c1 complex) that is part of the mitochondrial respiratory chain. The b-c1 complex mediates electron transfer from ubiquinol to cytochrome c. Contributes to the generation of a proton gradient across the mitochondrial membrane that is then used for ATP synthesis. The protein is Cytochrome b (MT-CYB) of Alca torda (Razorbill).